Here is a 667-residue protein sequence, read N- to C-terminus: Protein adenylyltransferase SelO, mitochondrial (667 aa).

Residues 1–6 constitute a mitochondrion transit peptide; it reads MASVRA. Positions 154, 156, 177, 189, 190, 247, and 254 each coordinate ATP. Asp-341 serves as the catalytic Proton acceptor. 2 residues coordinate Mg(2+): Asn-342 and Asp-351. Asp-351 is an ATP binding site. The disordered stretch occupies residues 628–652; that stretch reads YHSEEEATGPEAVARSTEEQSSYSN. Thr-635 bears the Phosphothreonine mark. Ser-651 is subject to Phosphoserine. Position 665 (Sec-665) is a non-standard amino acid, selenocysteine.

It belongs to the SELO family. It depends on Mg(2+) as a cofactor.

It is found in the mitochondrion. The catalysed reaction is L-tyrosyl-[protein] + ATP = O-(5'-adenylyl)-L-tyrosyl-[protein] + diphosphate. The enzyme catalyses L-threonyl-[protein] + ATP = 3-O-(5'-adenylyl)-L-threonyl-[protein] + diphosphate. It catalyses the reaction L-seryl-[protein] + ATP = 3-O-(5'-adenylyl)-L-seryl-[protein] + diphosphate. Its function is as follows. Catalyzes the transfer of adenosine 5'-monophosphate (AMP) to Ser, Thr and Tyr residues of target proteins (AMPylation). May be a redox-active mitochondrial selenoprotein which interacts with a redox target protein. The chain is Protein adenylyltransferase SelO, mitochondrial from Mus musculus (Mouse).